The chain runs to 215 residues: MGGKQSTAGRPRGAFPGVSTDDSAVPPSAHFGHYRPGGTMGLRSRSVSSVAGMGIDHSATVPFGFYTPRGTDSDRAGGGSGSDPAHNGNGYQETGGGHHTDGMLYLGSRASLADTLPLHIAPRWFSAHSGFKCPVCSKSVASNEMEVHFIMCLSKPRLSYNDDVLSRDAGECVICLEELQQGDTIARLPCLCIYHKSCIDSWFEINRSCPEHPSD.

2 disordered regions span residues 1–39 and 66–96; these read MGGK…PGGT and YTPR…ETGG. The N-myristoyl glycine moiety is linked to residue Gly-2. Residues 172–213 form an RING-type; atypical zinc finger; that stretch reads CVICLEELQQGDTIARLPCLCIYHKSCIDSWFEINRSCPEHP.

Its subcellular location is the endosome. The protein resides in the lysosome. The protein localises to the membrane. It catalyses the reaction S-ubiquitinyl-[E2 ubiquitin-conjugating enzyme]-L-cysteine + [acceptor protein]-L-lysine = [E2 ubiquitin-conjugating enzyme]-L-cysteine + N(6)-ubiquitinyl-[acceptor protein]-L-lysine.. The protein operates within protein modification; protein ubiquitination. Functionally, E3 ubiquitin-protein ligase that plays a role in neuron cells differentiation. Plays a role in the establishment and maintenance of neuronal transmission and plasticity. The chain is E3 ubiquitin-protein ligase znrf1 (znrf1) from Danio rerio (Zebrafish).